The chain runs to 552 residues: HTH-type transcriptional regulator SgrR (552 aa).

The region spanning 1 to 116 (MPSGRLQQQF…LISHLGRSFR (116 aa)) is the HTH marR-type domain. Positions 26-49 (LNELADLLNCSRRHMRTLLNTMQA) form a DNA-binding region, H-T-H motif. Residues 163 to 493 (ELEADIAHHW…RDWQDDAAQW (331 aa)) are solute-binding.

Its function is as follows. Activates the small RNA gene sgrS under glucose-phosphate stress conditions as well as yfdZ. Represses its own transcription under both stress and non-stress conditions. Might act as a sensor of the intracellular accumulation of phosphoglucose by binding these molecules in its C-terminal solute-binding domain. The protein is HTH-type transcriptional regulator SgrR of Salmonella choleraesuis (strain SC-B67).